Consider the following 266-residue polypeptide: 4-hydroxy-tetrahydrodipicolinate reductase (266 aa).

NAD(+)-binding positions include 8–13 and glutamate 33; that span reads GAAGRM. Residue arginine 34 participates in NADP(+) binding. Residues 97–99 and 121–124 each bind NAD(+); these read GST and APNM. The active-site Proton donor/acceptor is the histidine 154. Residue histidine 155 participates in (S)-2,3,4,5-tetrahydrodipicolinate binding. Catalysis depends on lysine 158, which acts as the Proton donor. 164 to 165 provides a ligand contact to (S)-2,3,4,5-tetrahydrodipicolinate; sequence GT.

The protein belongs to the DapB family.

It is found in the cytoplasm. The enzyme catalyses (S)-2,3,4,5-tetrahydrodipicolinate + NAD(+) + H2O = (2S,4S)-4-hydroxy-2,3,4,5-tetrahydrodipicolinate + NADH + H(+). The catalysed reaction is (S)-2,3,4,5-tetrahydrodipicolinate + NADP(+) + H2O = (2S,4S)-4-hydroxy-2,3,4,5-tetrahydrodipicolinate + NADPH + H(+). Its pathway is amino-acid biosynthesis; L-lysine biosynthesis via DAP pathway; (S)-tetrahydrodipicolinate from L-aspartate: step 4/4. Functionally, catalyzes the conversion of 4-hydroxy-tetrahydrodipicolinate (HTPA) to tetrahydrodipicolinate. This Trichlorobacter lovleyi (strain ATCC BAA-1151 / DSM 17278 / SZ) (Geobacter lovleyi) protein is 4-hydroxy-tetrahydrodipicolinate reductase.